The following is a 398-amino-acid chain: Phospholipase C (398 aa).

The first 28 residues, 1–28 (MKRKICKALICAALATSLWAGASTKVYA), serve as a signal peptide directing secretion. Zn(2+) is bound by residues W29, H39, D84, H96, H154, D158, H164, H176, and E180. In terms of domain architecture, Zn-dependent PLC spans 29-278 (WDGKIDGTGT…HDVSEGNDPS (250 aa)). The tract at residues 275 to 283 (NDPSVGKNV) is linker. The PLAT domain occupies 284–398 (KELVAYISTS…ISGNSTYNIK (115 aa)). Ca(2+) contacts are provided by D297, G299, T300, D301, D321, N322, G324, N325, D326, D364, and A365.

The protein belongs to the bacterial zinc-metallophospholipase C family. Ca(2+) is required as a cofactor. It depends on Zn(2+) as a cofactor.

Its subcellular location is the secreted. It carries out the reaction a 1,2-diacyl-sn-glycero-3-phosphocholine + H2O = phosphocholine + a 1,2-diacyl-sn-glycerol + H(+). Its function is as follows. Bacterial hemolysins are exotoxins that attack blood cell membranes and cause cell rupture. Constitutes an essential virulence factor in gas gangrene. Binds to eukaryotic membranes where it hydrolyzes both phosphatidylcholine and sphingomyelin. The diacylglycerol produced can activate both the arachidonic acid pathway, leading to modulation of the inflammatory response cascade and thrombosis, and protein kinase C, leading to activation of eukaryotic phospholipases and further membrane damage. Acts on human and mouse erythrocytes, but not on rabbit or horse erythrocytes. The sequence is that of Phospholipase C (plc) from Clostridium perfringens (strain ATCC 13124 / DSM 756 / JCM 1290 / NCIMB 6125 / NCTC 8237 / Type A).